The sequence spans 311 residues: RNA polymerase sigma factor SigA4 (311 aa).

The segment at 78 to 148 (MLKANLRLVV…TRAIDNHART (71 aa)) is sigma-70 factor domain-2. Positions 102–105 (DLIQ) match the Interaction with polymerase core subunit RpoC motif. Positions 157–234 (EKISRIKKMT…DPKSLEPMDA (78 aa)) are sigma-70 factor domain-3. A sigma-70 factor domain-4 region spans residues 247–304 (WLAHLTEREQQVLQLRFGLHDGEQHTLAEIGRRLNVSRERIRQVEARALQKLRVLSQQ). A DNA-binding region (H-T-H motif) is located at residues 273–292 (LAEIGRRLNVSRERIRQVEA).

This sequence belongs to the sigma-70 factor family.

The protein localises to the cytoplasm. In terms of biological role, sigma factors are initiation factors that promote the attachment of RNA polymerase to specific initiation sites and are then released. The sequence is that of RNA polymerase sigma factor SigA4 (sigA4) from Synechococcus elongatus (strain ATCC 33912 / PCC 7942 / FACHB-805) (Anacystis nidulans R2).